The chain runs to 323 residues: L-lactate dehydrogenase (323 aa).

NAD(+) contacts are provided by residues Val-18, Asp-39, Arg-44, Tyr-69, and 83–84 (GA). Substrate contacts are provided by Gln-86 and Arg-92. NAD(+) contacts are provided by residues Thr-105, 122–124 (AAN), and Ser-147. 124-127 (NPVD) contacts substrate. 152-155 (DTAR) serves as a coordination point for substrate. The Proton acceptor role is filled by His-179. Phosphotyrosine is present on Tyr-223. Thr-232 contributes to the substrate binding site.

The protein belongs to the LDH/MDH superfamily. LDH family. In terms of assembly, homotetramer.

The protein resides in the cytoplasm. The catalysed reaction is (S)-lactate + NAD(+) = pyruvate + NADH + H(+). Its pathway is fermentation; pyruvate fermentation to lactate; (S)-lactate from pyruvate: step 1/1. Catalyzes the conversion of lactate to pyruvate. In Pediococcus acidilactici, this protein is L-lactate dehydrogenase.